The primary structure comprises 280 residues: 4-hydroxy-3-methylbut-2-enyl diphosphate reductase (280 aa).

[4Fe-4S] cluster is bound at residue cysteine 12. (2E)-4-hydroxy-3-methylbut-2-enyl diphosphate contacts are provided by histidine 40 and histidine 72. The dimethylallyl diphosphate site is built by histidine 40 and histidine 72. Isopentenyl diphosphate-binding residues include histidine 40 and histidine 72. Cysteine 94 is a [4Fe-4S] cluster binding site. Histidine 122 lines the (2E)-4-hydroxy-3-methylbut-2-enyl diphosphate pocket. Histidine 122 contacts dimethylallyl diphosphate. Histidine 122 contributes to the isopentenyl diphosphate binding site. Catalysis depends on glutamate 124, which acts as the Proton donor. Threonine 160 contacts (2E)-4-hydroxy-3-methylbut-2-enyl diphosphate. Cysteine 188 lines the [4Fe-4S] cluster pocket. 3 residues coordinate (2E)-4-hydroxy-3-methylbut-2-enyl diphosphate: serine 216, asparagine 218, and serine 260. Residues serine 216, asparagine 218, and serine 260 each contribute to the dimethylallyl diphosphate site. Isopentenyl diphosphate is bound by residues serine 216, asparagine 218, and serine 260.

The protein belongs to the IspH family. It depends on [4Fe-4S] cluster as a cofactor.

The enzyme catalyses isopentenyl diphosphate + 2 oxidized [2Fe-2S]-[ferredoxin] + H2O = (2E)-4-hydroxy-3-methylbut-2-enyl diphosphate + 2 reduced [2Fe-2S]-[ferredoxin] + 2 H(+). It catalyses the reaction dimethylallyl diphosphate + 2 oxidized [2Fe-2S]-[ferredoxin] + H2O = (2E)-4-hydroxy-3-methylbut-2-enyl diphosphate + 2 reduced [2Fe-2S]-[ferredoxin] + 2 H(+). The protein operates within isoprenoid biosynthesis; dimethylallyl diphosphate biosynthesis; dimethylallyl diphosphate from (2E)-4-hydroxy-3-methylbutenyl diphosphate: step 1/1. Its pathway is isoprenoid biosynthesis; isopentenyl diphosphate biosynthesis via DXP pathway; isopentenyl diphosphate from 1-deoxy-D-xylulose 5-phosphate: step 6/6. Functionally, catalyzes the conversion of 1-hydroxy-2-methyl-2-(E)-butenyl 4-diphosphate (HMBPP) into a mixture of isopentenyl diphosphate (IPP) and dimethylallyl diphosphate (DMAPP). Acts in the terminal step of the DOXP/MEP pathway for isoprenoid precursor biosynthesis. The protein is 4-hydroxy-3-methylbut-2-enyl diphosphate reductase of Trichlorobacter lovleyi (strain ATCC BAA-1151 / DSM 17278 / SZ) (Geobacter lovleyi).